The sequence spans 662 residues: Fusion glycoprotein F0 (662 aa).

The tract at residues 1–73 is disordered; sequence MHRGIPKSSK…TRSRKQTSHR (73 aa). A signal peptide spans 1-135; that stretch reads MHRGIPKSSK…MASLFLCSKA (135 aa). Polar residues predominate over residues 8–19; it reads SSKTQTHTQQDR. Basic residues predominate over residues 64–73; it reads TRSRKQTSHR. The Extracellular portion of the chain corresponds to 136-608; it reads QIHWDNLSTI…VRRSSFNFGS (473 aa). N-linked (GlcNAc...) asparagine; by host glycosylation is found at N141, N173, and N179. Residues 225–249 are fusion peptide; that stretch reads FAGVVLAGVALGVATAAQITAGIAL. Residues 250–278 adopt a coiled-coil conformation; sequence HQSNLNAQAIQSLRTSLEQSNKAIEEIRE. Cystine bridges form between C446/C455, C470/C478, C502/C507, and C509/C532. A coiled-coil region spans residues 574–599; the sequence is NLGNALKKLDDAKVLIDSSNQILETV. Residues 609 to 629 form a helical membrane-spanning segment; that stretch reads LLSVPILSCTALALLLLIYCC. At 630 to 662 the chain is on the cytoplasmic side; it reads KRRYQQTLKQHTKVDPAFKPDLTGTSKSYVRSL.

The protein belongs to the paramyxoviruses fusion glycoprotein family. Homotrimer of disulfide-linked F1-F2. The inactive precursor F0 is glycosylated and proteolytically cleaved into F1 and F2 to be functionally active. The cleavage is mediated by cellular proteases during the transport and maturation of the polypeptide.

Its subcellular location is the virion membrane. It is found in the host cell membrane. In terms of biological role, class I viral fusion protein. Under the current model, the protein has at least 3 conformational states: pre-fusion native state, pre-hairpin intermediate state, and post-fusion hairpin state. During viral and plasma cell membrane fusion, the heptad repeat (HR) regions assume a trimer-of-hairpins structure, positioning the fusion peptide in close proximity to the C-terminal region of the ectodomain. The formation of this structure appears to drive apposition and subsequent fusion of viral and plasma cell membranes. Directs fusion of viral and cellular membranes leading to delivery of the nucleocapsid into the cytoplasm. This fusion is pH independent and occurs directly at the outer cell membrane. The trimer of F1-F2 (F protein) probably interacts with H at the virion surface. Upon HN binding to its cellular receptor, the hydrophobic fusion peptide is unmasked and interacts with the cellular membrane, inducing the fusion between cell and virion membranes. Later in infection, F proteins expressed at the plasma membrane of infected cells could mediate fusion with adjacent cells to form syncytia, a cytopathic effect that could lead to tissue necrosis. The sequence is that of Fusion glycoprotein F0 (F) from Canine distemper virus (strain Onderstepoort) (CDV).